The following is an 864-amino-acid chain: Leucine--tRNA ligase (864 aa).

A 'HIGH' region motif is present at residues 57–67; that stretch reads PYPSGNLHMGH. The 'KMSKS' region motif lies at 628–632; sequence KMSKS. An ATP-binding site is contributed by Lys631.

This sequence belongs to the class-I aminoacyl-tRNA synthetase family.

The protein resides in the cytoplasm. It catalyses the reaction tRNA(Leu) + L-leucine + ATP = L-leucyl-tRNA(Leu) + AMP + diphosphate. This chain is Leucine--tRNA ligase, found in Prochlorococcus marinus (strain MIT 9515).